The following is a 314-amino-acid chain: Zinc transporter ZIP3 (314 aa).

Topologically, residues 1 to 3 (MNL) are extracellular. The chain crosses the membrane as a helical span at residues 4–24 (IFAKVLCLLAILVLMMLGSLI). The Cytoplasmic portion of the chain corresponds to 25-41 (PVKISEADFDKSSRSRK). Residues 42–62 (ILSLSNSFAGGVFLATCFNAL) form a helical membrane-spanning segment. Residues 63–84 (LPAVREKFFDLLKIGNISTDYP) lie on the Extracellular side of the membrane. A helical membrane pass occupies residues 85-105 (LAETIMMVGFFLTVFVEQTVM). The Cytoplasmic portion of the chain corresponds to 106-169 (TFRKEKPSFI…KELSSSSPIR (64 aa)). Residues 170–190 (LFSLVFALSAHSVFEGLALGL) traverse the membrane as a helical segment. At 191–196 (QEDGNK) the chain is on the extracellular side. The helical transmembrane segment at 197-217 (LLSLFIGVVIHETLVAMALGV) threads the bilayer. The Cytoplasmic portion of the chain corresponds to 218 to 229 (SMAKVNTHLKDA). The chain crosses the membrane as a helical span at residues 230–250 (IKMAVLVSTMIPIGIVVGMAI). The Extracellular segment spans residues 251–262 (QSAQNMASSIAS). The helical transmembrane segment at 263-283 (ALLQGIAGGTFIFVTFFEILV) threads the bilayer. Topologically, residues 284–292 (KELEEKNDR) are cytoplasmic. Residues 293–313 (LLKVLFLVLGYTVLAVLVLFK) traverse the membrane as a helical segment. A topological domain (extracellular) is located at residue tryptophan 314.

The protein belongs to the ZIP transporter (TC 2.A.5) family.

It localises to the cell membrane. The protein localises to the apical cell membrane. The catalysed reaction is Zn(2+)(in) = Zn(2+)(out). Functionally, transporter for the divalent cation Zn(2+). Mediates the influx of Zn(2+) into cells from extracellular space. The chain is Zinc transporter ZIP3 (slc39a3) from Xenopus tropicalis (Western clawed frog).